Consider the following 126-residue polypeptide: Probable S-adenosyl-L-methionine-binding protein MJ1583 (126 aa).

Residues 4 to 126 (LKPIGVVEQN…FSEKLDCPKI (123 aa)) form the TsaA-like domain. S-adenosyl-L-methionine-binding positions include 45 to 46 (HK), arginine 75, and 106 to 109 (YNET).

This sequence belongs to the tRNA methyltransferase O family.

The sequence is that of Probable S-adenosyl-L-methionine-binding protein MJ1583 from Methanocaldococcus jannaschii (strain ATCC 43067 / DSM 2661 / JAL-1 / JCM 10045 / NBRC 100440) (Methanococcus jannaschii).